Here is a 685-residue protein sequence, read N- to C-terminus: N(6)-adenosine-methyltransferase MT-A70-like (685 aa).

S-adenosyl-L-methionine contacts are provided by residues 464-465 (DI) and Asp-482. A positively charged region required for RNA-binding region spans residues 552-565 (RIIRTGRTGHWLNH). S-adenosyl-L-methionine-binding positions include Lys-599, 622 to 625 (RMHN), and 635 to 636 (NQ). Positions 657–685 (EIDVQPPSPPRASAMETDNEPMAIDSITA) are disordered. Phosphoserine is present on Ser-664.

The protein belongs to the MT-A70-like family. As to quaternary structure, interacts with FIP37. Interacts with MTB. Associates with MTB, FIP37, VIR and HAKAI to form the m6A writer complex which is essential for adenosine methylation at specific mRNA sequences.

Its subcellular location is the nucleus. The catalysed reaction is an adenosine in mRNA + S-adenosyl-L-methionine = an N(6)-methyladenosine in mRNA + S-adenosyl-L-homocysteine + H(+). Functionally, catalytic subunit of the N6-methyltransferase complex, a multiprotein complex that mediates N6-methyladenosine (m6A) methylation at the 5'-[AG]GAC-3' consensus sites of some mRNAs. Associates with MTB, FIP37, VIR and HAKAI to form the m6A writer complex which is essential for adenosine methylation at specific mRNA sequences. N6-methyladenosine (m6A) plays a role in mRNA stability, processing, translation efficiency and editing. In Arabidopsis thaliana (Mouse-ear cress), this protein is N(6)-adenosine-methyltransferase MT-A70-like.